Reading from the N-terminus, the 334-residue chain is DNA polymerase III subunit delta' (334 aa).

The DNA polymerase III holoenzyme complex contains at least 10 different subunits organized into 3 functionally essential subassemblies: the Pol III core, the beta sliding clamp processivity factor and the clamp-loading complex. The Pol III core (subunits alpha, epsilon and theta) contains the polymerase and the 3'-5' exonuclease proofreading activities. The polymerase is tethered to the template via the dimeric beta sliding clamp processivity factor. The clamp-loading complex (also called gamma complex) assembles the beta sliding clamp onto the primed template and plays a central role in the organization and communication at the replication fork. The clamp-loading complex contains delta, delta', psi and chi, and 3 copies of either or both of two different DnaX proteins, gamma and tau. The DNA replisome complex has a single clamp loader (3 tau and 1 each of delta, delta', psi and chi subunits) which binds 3 Pol III cores (1 core on the leading strand and 2 on the lagging strand) each with a beta sliding clamp dimer. Additional proteins in the replisome are other copies of gamma, psi and chi, Ssb, DNA helicase and RNA primase. The clamp loader hydrolyzes ATP to assemble the beta processivity factor onto the primed template and plays a central role in the organization and communication at the replication fork; the minimal complex to load the beta sliding clamp on DNA is delta, delta', gamma.

It catalyses the reaction DNA(n) + a 2'-deoxyribonucleoside 5'-triphosphate = DNA(n+1) + diphosphate. Functionally, part of the beta sliding clamp loading complex, which hydrolyzes ATP to load the beta clamp onto primed DNA to form the DNA replication pre-initiation complex. DNA polymerase III is a complex, multichain enzyme responsible for most of the replicative synthesis in bacteria. This DNA polymerase also exhibits 3' to 5' exonuclease activity. The gamma complex (gamma(3),delta,delta') is thought to load beta dimers onto DNA by binding ATP which alters the complex's conformation so it can bind beta sliding clamp dimers and open them at one interface. Primed DNA is recognized, ATP is hydrolyzed releasing the gamma complex and closing the beta sliding clamp ring around the primed DNA. This chain is DNA polymerase III subunit delta' (holB), found in Escherichia coli (strain K12).